The following is an 82-amino-acid chain: ASGEELFKSKPCGACHSVQAKLVGPALKDVAAKNAGVDGAADVLAGHIKNGSTGVWGAMPMPPNPVTEEEAKTLAEWVLTLK.

4 residues coordinate heme c: Cys-12, Cys-15, His-16, and Met-61.

Binds 1 heme c group covalently per subunit.

This is a prokaryotic monoheme cytochrome, unreactive with mitochondrial cytochrome C oxidase or reductase. It functions in nitrite and nitrate respiration in Pseudomonas, but it is also found in other bacteria. The polypeptide is Cytochrome c-551 (Ectopseudomonas mendocina (Pseudomonas mendocina)).